Reading from the N-terminus, the 128-residue chain is Aspartate 1-decarboxylase (128 aa).

The Schiff-base intermediate with substrate; via pyruvic acid role is filled by Ser25. Ser25 is modified (pyruvic acid (Ser)). Residue Thr57 coordinates substrate. Residue Tyr58 is the Proton donor of the active site. Residue 73 to 75 (GAA) coordinates substrate.

Belongs to the PanD family. As to quaternary structure, heterooctamer of four alpha and four beta subunits. It depends on pyruvate as a cofactor. Is synthesized initially as an inactive proenzyme, which is activated by self-cleavage at a specific serine bond to produce a beta-subunit with a hydroxyl group at its C-terminus and an alpha-subunit with a pyruvoyl group at its N-terminus.

Its subcellular location is the cytoplasm. The catalysed reaction is L-aspartate + H(+) = beta-alanine + CO2. The protein operates within cofactor biosynthesis; (R)-pantothenate biosynthesis; beta-alanine from L-aspartate: step 1/1. Catalyzes the pyruvoyl-dependent decarboxylation of aspartate to produce beta-alanine. This chain is Aspartate 1-decarboxylase, found in Caldicellulosiruptor saccharolyticus (strain ATCC 43494 / DSM 8903 / Tp8T 6331).